The chain runs to 595 residues: Protein kinase C iota type (595 aa).

A compositionally biased stretch (polar residues) spans methionine 1–histidine 12. Residues methionine 1–aspartate 21 form a disordered region. Residue proline 2 is modified to N-acetylproline. The segment at proline 2–valine 28 is required for interaction with RAB2. The segment at proline 2–aspartate 252 is regulatory domain. A Phosphothreonine modification is found at threonine 3. Phosphoserine occurs at positions 7 and 8. Threonine 9 carries the post-translational modification Phosphothreonine. A PB1 domain is found at glutamine 25–cysteine 108. The interval aspartate 72–arginine 91 is interaction with PARD6A. A Pseudosubstrate motif is present at residues tyrosine 125–lysine 134. The segment at glycine 140–cysteine 190 adopts a Phorbol-ester/DAG-type zinc-finger fold. Residues phenylalanine 253–phenylalanine 521 enclose the Protein kinase domain. Isoleucine 259–valine 267 contacts ATP. Phosphotyrosine; by SRC is present on residues tyrosine 264 and tyrosine 279. Lysine 282 lines the ATP pocket. Tyrosine 333 is modified (phosphotyrosine; by SRC). Catalysis depends on aspartate 377, which acts as the Proton acceptor. A phosphothreonine mark is found at threonine 411 and threonine 563. Positions arginine 522 to glutamate 593 constitute an AGC-kinase C-terminal domain.

It belongs to the protein kinase superfamily. AGC Ser/Thr protein kinase family. PKC subfamily. In terms of assembly, forms a complex with SQSTM1 and MP2K5. Interacts directly with SQSTM1. Interacts with IKBKB. Interacts with PARD6A, PARD6B and PARD6G. Part of a quaternary complex containing aPKC, PARD3, a PARD6 protein (PARD6A, PARD6B or PARD6G) and a GTPase protein (CDC42 or RAC1). Part of a complex with LLGL1 and PARD6B. Interacts with ADAP1/CENTA1. Interaction with SMG1, through the ZN-finger domain, activates the kinase activity. Interacts with CDK7. Forms a complex with RAB2A and GAPDH involved in recruitment onto the membrane of vesicular tubular clusters (VTCs). Interacts with ECT2 ('Thr-359' phosphorylated form). Interacts with VAMP2. Interacts with WDFY2 (via WD repeats 1-3). In terms of processing, phosphorylation at Thr-411 in the activation loop is not mandatory for activation. Upon neuronal growth factor (NGF) stimulation, phosphorylated by SRC at Tyr-264, Tyr-279 and Tyr-333. Phosphorylation on Tyr-264 facilitates binding to KPNB1/importin-beta regulating entry of PRKCI into the nucleus. Phosphorylation on Tyr-333 is important for NF-kappa-B stimulation. Phosphorylated at Thr-563 during the initial phase of long term potentiation.

It is found in the cytoplasm. Its subcellular location is the membrane. The protein localises to the endosome. The protein resides in the nucleus. It catalyses the reaction L-seryl-[protein] + ATP = O-phospho-L-seryl-[protein] + ADP + H(+). The catalysed reaction is L-threonyl-[protein] + ATP = O-phospho-L-threonyl-[protein] + ADP + H(+). Atypical PKCs (PRKCI and PRKCZ) exhibit an elevated basal enzymatic activity (that may be due to the interaction with SMG1 or SQSTM1) and are not regulated by diacylglycerol, phosphatidylserine, phorbol esters or calcium ions. Two specific sites, Thr-411 (activation loop of the kinase domain) and Thr-563 (turn motif), need to be phosphorylated for its full activation. Might also be a target for novel lipid activators that are elevated during nutrient-stimulated insulin secretion. Calcium- and diacylglycerol-independent serine/ threonine-protein kinase that plays a general protective role against apoptotic stimuli, is involved in NF-kappa-B activation, cell survival, differentiation and polarity, and contributes to the regulation of microtubule dynamics in the early secretory pathway. Is necessary for BCR-ABL oncogene-mediated resistance to apoptotic drug in leukemia cells, protecting leukemia cells against drug-induced apoptosis. In cultured neurons, prevents amyloid beta protein-induced apoptosis by interrupting cell death process at a very early step. In glioblastoma cells, may function downstream of phosphatidylinositol 3-kinase (PI3K) and PDPK1 in the promotion of cell survival by phosphorylating and inhibiting the pro-apoptotic factor BAD. Can form a protein complex in non-small cell lung cancer (NSCLC) cells with PARD6A and ECT2 and regulate ECT2 oncogenic activity by phosphorylation, which in turn promotes transformed growth and invasion. In response to nerve growth factor (NGF), acts downstream of SRC to phosphorylate and activate IRAK1, allowing the subsequent activation of NF-kappa-B and neuronal cell survival. Functions in the organization of the apical domain in epithelial cells by phosphorylating EZR. This step is crucial for activation and normal distribution of EZR at the early stages of intestinal epithelial cell differentiation. Forms a protein complex with LLGL1 and PARD6B independently of PARD3 to regulate epithelial cell polarity. Plays a role in microtubule dynamics in the early secretory pathway through interaction with RAB2A and GAPDH and recruitment to vesicular tubular clusters (VTCs). In human coronary artery endothelial cells (HCAEC), is activated by saturated fatty acids and mediates lipid-induced apoptosis. Downstream of PI3K is required for insulin-stimulated glucose transport. Activates RAB4A and promotes its association with KIF3A which is required for the insulin-induced SLC2A4/GLUT4 translocation in adipocytes. Is essential in early embryogenesis and development of differentiating photoreceptors by playing a role in the establishment of epithelial and neuronal polarity. Involved in early synaptic long term potentiation phase in CA1 hippocampal cells and short term memory formation. This Mus musculus (Mouse) protein is Protein kinase C iota type (Prkci).